Consider the following 325-residue polypeptide: Germination protease (325 aa).

Residues 1–7 (MYNVRTD) constitute a propeptide that is removed on maturation.

It belongs to the peptidase A25 family. As to quaternary structure, homotetramer. Autoproteolytically processed. The inactive tetrameric zymogen termed p46 autoprocesses to a smaller form termed p41, which is active only during spore germination.

The enzyme catalyses Endopeptidase action with P4 Glu or Asp, P1 preferably Glu &gt; Asp, P1' hydrophobic and P2' Ala.. Its function is as follows. Initiates the rapid degradation of small, acid-soluble proteins during spore germination. This chain is Germination protease, found in Clostridium perfringens (strain ATCC 13124 / DSM 756 / JCM 1290 / NCIMB 6125 / NCTC 8237 / Type A).